A 595-amino-acid polypeptide reads, in one-letter code: Actin-histidine N-methyltransferase (595 aa).

The tract at residues 1–22 is disordered; sequence MGKKSRVKTQKSGTGATATVSP. Positions 10–20 are enriched in polar residues; sequence QKSGTGATATV. Residues R75, 104–106, R254, 275–279, and 325–327 each bind S-adenosyl-L-methionine; these read EGF, DMCNH, and SGF. In terms of domain architecture, SET spans 94–314; the sequence is EGFEMVNFKE…AGEQIYIFYG (221 aa). Residue S513 is modified to Phosphoserine. Residues 549 to 563 are compositionally biased toward polar residues; that stretch reads ENGLVNGENSIPNGT. A disordered region spans residues 549–595; it reads ENGLVNGENSIPNGTRSEDENLNQEESKRAVEDAKGSSSDRADAVKE. Basic and acidic residues predominate over residues 573-595; the sequence is EESKRAVEDAKGSSSDRADAVKE.

The protein belongs to the class V-like SAM-binding methyltransferase superfamily. SETD3 actin-histidine methyltransferase family. Interacts with MYOD1. In terms of processing, phosphorylated by GSK3B, which is required for recognition by the SCF(FBXW7) complex and subsequent degradation. Ubiquitinated by the SCF(FBXW7) complex following phosphorylation by GSK3B, leading to its degradation by the proteasome.

Its subcellular location is the cytoplasm. The protein resides in the nucleus. It carries out the reaction L-histidyl-[protein] + S-adenosyl-L-methionine = N(tele)-methyl-L-histidyl-[protein] + S-adenosyl-L-homocysteine + H(+). In terms of biological role, protein-histidine N-methyltransferase that specifically mediates 3-methylhistidine (tele-methylhistidine) methylation of actin at 'His-73'. Histidine methylation of actin is required for smooth muscle contraction of the laboring uterus during delivery. Does not have protein-lysine N-methyltransferase activity and probably only catalyzes histidine methylation of actin. The chain is Actin-histidine N-methyltransferase from Callithrix jacchus (White-tufted-ear marmoset).